Reading from the N-terminus, the 779-residue chain is Protein phosphatase 1 regulatory subunit 21 (779 aa).

Coiled-coil stretches lie at residues 2–212 (AATA…QAAL) and 556–614 (TESR…ETVQ). 2 disordered regions span residues 85 to 105 (ETRG…SQEQ) and 612 to 637 (TVQE…QREP). The span at 96–105 (ESSSQLSQEQ) shows a compositional bias: low complexity. Residues 624 to 637 (EQKEETTEKSQREP) are compositionally biased toward basic and acidic residues. Residues 693 to 739 (AECRALAKRLSLAEKSKESLTEELKLASQSISRLQDELMTTKRSYED) are a coiled coil. The segment at 760–779 (EEIDTLKMTSKGNSKKNKTR) is disordered.

As to quaternary structure, component of the FERRY complex.

Its subcellular location is the early endosome. In terms of biological role, component of the FERRY complex (Five-subunit Endosomal Rab5 and RNA/ribosome intermediary). The FERRY complex directly interacts with mRNAs and RAB5A, and functions as a RAB5A effector involved in the localization and the distribution of specific mRNAs most likely by mediating their endosomal transport. The complex recruits mRNAs and ribosomes to early endosomes through direct mRNA-interaction. Putative regulator of protein phosphatase 1 (PP1) activity. May play a role in the endosomal sorting process or in endosome maturation pathway. This is Protein phosphatase 1 regulatory subunit 21 (PPP1R21) from Gallus gallus (Chicken).